The chain runs to 328 residues: D-cysteine desulfhydrase (328 aa).

Lys51 carries the N6-(pyridoxal phosphate)lysine modification.

It belongs to the ACC deaminase/D-cysteine desulfhydrase family. Homodimer. Requires pyridoxal 5'-phosphate as cofactor.

The enzyme catalyses D-cysteine + H2O = hydrogen sulfide + pyruvate + NH4(+) + H(+). In terms of biological role, catalyzes the alpha,beta-elimination reaction of D-cysteine and of several D-cysteine derivatives. It could be a defense mechanism against D-cysteine. This Shigella flexneri serotype 5b (strain 8401) protein is D-cysteine desulfhydrase.